The chain runs to 339 residues: Glyceraldehyde-3-phosphate dehydrogenase (339 aa).

Residues 12-13, aspartate 39, arginine 84, and serine 127 each bind NAD(+); that span reads RI. D-glyceraldehyde 3-phosphate is bound by residues 157 to 159, threonine 188, arginine 203, 216 to 217, and arginine 239; these read SCT and TG. Catalysis depends on cysteine 158, which acts as the Nucleophile. Residue asparagine 320 participates in NAD(+) binding.

The protein belongs to the glyceraldehyde-3-phosphate dehydrogenase family. Homotetramer.

It localises to the cytoplasm. The catalysed reaction is D-glyceraldehyde 3-phosphate + phosphate + NAD(+) = (2R)-3-phospho-glyceroyl phosphate + NADH + H(+). The protein operates within carbohydrate degradation; glycolysis; pyruvate from D-glyceraldehyde 3-phosphate: step 1/5. Its function is as follows. Catalyzes the oxidative phosphorylation of glyceraldehyde 3-phosphate (G3P) to 1,3-bisphosphoglycerate (BPG) using the cofactor NAD. The first reaction step involves the formation of a hemiacetal intermediate between G3P and a cysteine residue, and this hemiacetal intermediate is then oxidized to a thioester, with concomitant reduction of NAD to NADH. The reduced NADH is then exchanged with the second NAD, and the thioester is attacked by a nucleophilic inorganic phosphate to produce BPG. The protein is Glyceraldehyde-3-phosphate dehydrogenase (gapA) of Mycobacterium avium.